Here is a 314-residue protein sequence, read N- to C-terminus: tRNA-cytidine(32) 2-sulfurtransferase (314 aa).

Residues 49 to 54 (SGGKDS) carry the PP-loop motif motif. Residues Cys124, Cys127, and Cys215 each contribute to the [4Fe-4S] cluster site.

It belongs to the TtcA family. In terms of assembly, homodimer. Mg(2+) is required as a cofactor. It depends on [4Fe-4S] cluster as a cofactor.

Its subcellular location is the cytoplasm. It carries out the reaction cytidine(32) in tRNA + S-sulfanyl-L-cysteinyl-[cysteine desulfurase] + AH2 + ATP = 2-thiocytidine(32) in tRNA + L-cysteinyl-[cysteine desulfurase] + A + AMP + diphosphate + H(+). It participates in tRNA modification. Its function is as follows. Catalyzes the ATP-dependent 2-thiolation of cytidine in position 32 of tRNA, to form 2-thiocytidine (s(2)C32). The sulfur atoms are provided by the cysteine/cysteine desulfurase (IscS) system. The chain is tRNA-cytidine(32) 2-sulfurtransferase from Pasteurella multocida (strain Pm70).